The following is a 2190-amino-acid chain: Integrator complex subunit 1 (2190 aa).

The disordered stretch occupies residues 1 to 61 (MNRAKPTTVR…GLPSERKRDA (61 aa)). A Phosphoserine modification is found at S13. Residues 34 to 44 (GQANESKTAST) show a composition bias toward polar residues. N6-acetyllysine is present on K47. T83 is subject to Phosphothreonine. 3 positions are modified to phosphoserine: S87, S307, and S924. The segment at 922–945 (AASGEEDDEGESKEQKAKKRQRQQ) is disordered. Positions 923–932 (ASGEEDDEGE) are enriched in acidic residues. The helical transmembrane segment at 1159 to 1179 (TATMHILVVHAMVILLTLGPP) threads the bilayer. Positions 1311–1334 (SLPPRRDSTEAPKPKSSPEQPIGQ) are disordered. A compositionally biased stretch (basic and acidic residues) spans 1314-1323 (PRRDSTEAPK). A phosphoserine mark is found at S1318, S1326, S1327, and S1395.

It belongs to the Integrator subunit 1 family. Component of the Integrator complex, composed of core subunits INTS1, INTS2, INTS3, INTS4, INTS5, INTS6, INTS7, INTS8, INTS9/RC74, INTS10, INTS11/CPSF3L, INTS12, INTS13, INTS14 and INTS15. The core complex associates with protein phosphatase 2A subunits PPP2CA and PPP2R1A, to form the Integrator-PP2A (INTAC) complex. Interacts with ESRRB, ESRRB is not a core component of the Integrator complex and this association is a bridge for the interaction with the multiprotein complex Integrator; attracts the transcriptional machinery.

The protein resides in the nucleus. The protein localises to the nucleus membrane. Its function is as follows. Component of the integrator complex, a multiprotein complex that terminates RNA polymerase II (Pol II) transcription in the promoter-proximal region of genes. The integrator complex provides a quality checkpoint during transcription elongation by driving premature transcription termination of transcripts that are unfavorably configured for transcriptional elongation: the complex terminates transcription by (1) catalyzing dephosphorylation of the C-terminal domain (CTD) of Pol II subunit POLR2A/RPB1 and SUPT5H/SPT5, (2) degrading the exiting nascent RNA transcript via endonuclease activity and (3) promoting the release of Pol II from bound DNA. The integrator complex is also involved in terminating the synthesis of non-coding Pol II transcripts, such as enhancer RNAs (eRNAs), small nuclear RNAs (snRNAs), telomerase RNAs and long non-coding RNAs (lncRNAs). Within the integrator complex, INTS1 is involved in the post-termination step: INTS1 displaces INTS3 and the SOSS factors, allowing the integrator complex to return to the closed conformation, ready to bind to the paused elongation complex for another termination cycle. Mediates recruitment of cytoplasmic dynein to the nuclear envelope, probably as component of the integrator complex. The protein is Integrator complex subunit 1 of Homo sapiens (Human).